A 136-amino-acid polypeptide reads, in one-letter code: Ig heavy chain V-A2 region P-MU-3 (136 aa).

The first 19 residues, 1–19 (METGLRWLLLVAVLKGVQC), serve as a signal peptide directing secretion. At Gln20 the chain carries Pyrrolidone carboxylic acid. One can recognise an Ig-like domain in the interval 20–127 (QSVKESEGGL…ENEFFNAIWG (108 aa)).

This chain is Ig heavy chain V-A2 region P-MU-3, found in Oryctolagus cuniculus (Rabbit).